Here is a 170-residue protein sequence, read N- to C-terminus: Guided entry of tail-anchored proteins factor 1 (170 aa).

At 1–6 (MAAGFN) the chain is on the lumenal side. A helical membrane pass occupies residues 7–27 (WFLVLSSVFLCNLVKTFLPSI). Residues 28-96 (SSFLSKIFHK…KSRTAQQAKM (69 aa)) are Cytoplasmic-facing. Residues 35–93 (FHKDADQEMEMRTEIQNMKMELSTISMMDEFARYARLERKINKMTDQLKTLVKSRTAQQ) are interaction with GET3/TRC40. The stretch at 61-91 (MMDEFARYARLERKINKMTDQLKTLVKSRTA) forms a coiled coil. Residues 97 to 117 (KWIVNIAFYILQAALMISLIL) form a helical membrane-spanning segment. The Lumenal segment spans residues 118–137 (KYYADPVTVVPSKWIAPLER). Residues 138 to 158 (LVAFPSGVAGGVGITCWLVVC) traverse the membrane as a helical segment. Residues 159–170 (NKVVALILQAVS) lie on the Cytoplasmic side of the membrane.

Belongs to the WRB/GET1 family. As to quaternary structure, component of the Golgi to ER traffic (GET) complex, which is composed of GET1/WRB, CAMLG/GET2 and GET3/TRC40. Within the complex, GET1 and CAMLG form a heterotetramer which is stabilized by phosphatidylinositol binding and which binds to the GET3 homodimer.

Its subcellular location is the endoplasmic reticulum membrane. Its function is as follows. Required for the post-translational delivery of tail-anchored (TA) proteins to the endoplasmic reticulum (ER). Together with CAMLG/GET2, acts as a membrane receptor for soluble GET3/TRC40, which recognizes and selectively binds the transmembrane domain of TA proteins in the cytosol. Required to ensure correct topology and ER insertion of CAMLG. In Danio rerio (Zebrafish), this protein is Guided entry of tail-anchored proteins factor 1.